The primary structure comprises 471 residues: MSYPQGYLYQAPGSLALYSCPAYGASALAAPRSEELARSASGSAFSPYPGSAAFTAQAATGFGSPLQYSADAAAAAAGFPSYMGAPYDAHTTGMTGAISYHPYGSAAYPYQLNDPAYRKNATRDATATLKAWLNEHRKNPYPTKGEKIMLAIITKMTLTQVSTWFANARRRLKKENKMTWAPRNKSEDEDEDEGDATRSKDESPDKAQEGTETSAEDEGISLHVDSLTDHSCSAESDGEKLPCRAGDPLCESGSECKDKYDDLEDDEDDDEEGERGLAPPKPVTSSPLTGLEAPLLSPPPEAAPRGGRKTPQGSRTSPGAPPPASKPKLWSLAEIATSDLKQPSLGPGCGPPGLPAAAAPASTGAPPGGSPYPASPLLGRPLYYTSPFYGNYTNYGNLNAALQGQGLLRYNSAAAAPGEALHTAPKAASDAGKAGAHPLESHYRSPGGGYEPKKDASEGCTVVGGGVQPYL.

The segment at residues 112–175 (LNDPAYRKNA…ANARRRLKKE (64 aa)) is a DNA-binding region (homeobox; TALE-type). 2 disordered regions span residues 176–373 (NKMT…SPYP) and 424–471 (APKA…QPYL). Ser-186 bears the Phosphoserine mark. The span at 195–209 (DATRSKDESPDKAQE) shows a compositional bias: basic and acidic residues. A compositionally biased stretch (acidic residues) spans 261–273 (DDLEDDEDDDEEG). Over residues 355–367 (PAAAAPASTGAPP) the composition is skewed to low complexity. Residues 462–471 (VVGGGVQPYL) show a composition bias toward gly residues.

The protein belongs to the TALE/IRO homeobox family.

It is found in the nucleus. The protein is Iroquois-class homeodomain protein IRX-2 (IRX2) of Homo sapiens (Human).